The primary structure comprises 325 residues: MIELFVIKDTEWLELVAESVSLEGHRYQAPRSIEATIVTKQGDQTYYSVSEGDTVLFKWKGKELFRGIVFARTPDEHTLAFSAYDMLQYLVKNQDMYVFSNQRADQIIRRIASDFQIPTTSIANTGHTIKSLVIKNDTTLYDIILKALKQTKSQTGRHYQLYSEKGKLGLRAWPDPSEVWVLETGVNITGYQYSTSINDTATRVVLRRQKDNKTYKASAKDSSGLNKYGVLQYTETVTDDINQAQLQQRADVRLAEKKGVKKELKNIQAVGIPEVQSGLPVYISIPEAGIKKTYWVDTDRHEFKGTKHTMTIDVVEKNTMPEGVS.

To B.subtilis YqbQ.

The polypeptide is Phage-like element PBSX protein XkdQ (xkdQ) (Bacillus subtilis (strain 168)).